Here is a 362-residue protein sequence, read N- to C-terminus: MKKTALYSWHEQAGAKIIDFGGYLMPVQYSGIIAEHKAVREAAGLFDVSHMGNFYVRGVRAGEFLQYLTTNDLSKVSDGEAQYNLMLYTDGGVVDDLIIYRIDAETYFLIVNASNAQKDYAWIQKHIGAFEGVSLEDRTDELSLVALQGPMSGAILRKVFPDEDCNTLASFRFRKVYYNGTELLIARTGYTGEQGVEICLPNEAALELWSVLMKAGEEYGIQPIGLGARDTLRLEMGYSLYGHEIDSTVNPLEARLKWVVKMEKGPFIGKEACRQVELNPRYAVAGFSLDGRALPRQHFRLYNSDRQEIGTVCSGTLSPTLQEPIGTCSILREYSRPGTHVMVEIRGTMHQGVIRALPFVQR.

The protein belongs to the GcvT family. In terms of assembly, the glycine cleavage system is composed of four proteins: P, T, L and H.

The enzyme catalyses N(6)-[(R)-S(8)-aminomethyldihydrolipoyl]-L-lysyl-[protein] + (6S)-5,6,7,8-tetrahydrofolate = N(6)-[(R)-dihydrolipoyl]-L-lysyl-[protein] + (6R)-5,10-methylene-5,6,7,8-tetrahydrofolate + NH4(+). Its function is as follows. The glycine cleavage system catalyzes the degradation of glycine. This is Aminomethyltransferase from Chlorobium limicola (strain DSM 245 / NBRC 103803 / 6330).